Consider the following 440-residue polypeptide: Thymidine phosphorylase (440 aa).

Belongs to the thymidine/pyrimidine-nucleoside phosphorylase family. As to quaternary structure, homodimer.

The catalysed reaction is thymidine + phosphate = 2-deoxy-alpha-D-ribose 1-phosphate + thymine. It functions in the pathway pyrimidine metabolism; dTMP biosynthesis via salvage pathway; dTMP from thymine: step 1/2. Its function is as follows. The enzymes which catalyze the reversible phosphorolysis of pyrimidine nucleosides are involved in the degradation of these compounds and in their utilization as carbon and energy sources, or in the rescue of pyrimidine bases for nucleotide synthesis. The chain is Thymidine phosphorylase from Salmonella agona (strain SL483).